The following is a 499-amino-acid chain: Endoglucanase (499 aa).

Positions 1–29 (MKRSISIFITCLLITLLTMGGMIASPASA) are cleaved as a signal peptide. Residues H65, 69-70 (WY), Y96, and H131 contribute to the substrate site. E169 acts as the Proton donor in catalysis. Y231 is a substrate binding site. E257 functions as the Nucleophile in the catalytic mechanism. Substrate is bound by residues 263 to 264 (AS), W291, and 296 to 298 (KQE). The 150-residue stretch at 350-499 (QENGISVQYR…GKLIWGTEPN (150 aa)) folds into the CBM3 domain.

Belongs to the glycosyl hydrolase 5 (cellulase A) family.

The catalysed reaction is Endohydrolysis of (1-&gt;4)-beta-D-glucosidic linkages in cellulose, lichenin and cereal beta-D-glucans.. The chain is Endoglucanase (eglS) from Bacillus subtilis (strain 168).